We begin with the raw amino-acid sequence, 145 residues long: MGTSFVGYLTFVLLLLALTKVRGGPAYNSPLSSDLSDLKGLLERLEDRLPVEEVETPVQDIFAPNYDSADSSNSAPSLTVEAARPGADMMYNRGSWTQQEKSSPLRNKLRELLNAPRSMRRSSDCFGSRIDRIGAQSGMGCGRRF.

The N-terminal stretch at 1–23 (MGTSFVGYLTFVLLLLALTKVRG) is a signal peptide. Positions 24 to 117 (GPAYNSPLSS…KLRELLNAPR (94 aa)) are excised as a propeptide. Cys125 and Cys141 form a disulfide bridge.

It belongs to the natriuretic peptide family. Cleaved upon secretion to produce the functional hormone.

The protein localises to the secreted. Functionally, hormone playing a key role in cardiovascular homeostasis through regulation of natriuresis, diuresis, and vasodilation. Has a cGMP-stimulating activity. The chain is Natriuretic peptides A from Aquarana catesbeiana (American bullfrog).